We begin with the raw amino-acid sequence, 105 residues long: ATP synthase subunit c (105 aa).

Transmembrane regions (helical) follow at residues 3–23 (FLAL…GGMG), 32–52 (SILG…IGMG), and 78–98 (VAMA…IIAI).

The protein belongs to the ATPase C chain family. As to quaternary structure, F-type ATPases have 2 components, F(1) - the catalytic core - and F(0) - the membrane proton channel. F(1) has five subunits: alpha(3), beta(3), gamma(1), delta(1), epsilon(1). F(0) has three main subunits: a(1), b(2) and c(10-14). The alpha and beta chains form an alternating ring which encloses part of the gamma chain. F(1) is attached to F(0) by a central stalk formed by the gamma and epsilon chains, while a peripheral stalk is formed by the delta and b chains.

It localises to the cell inner membrane. In terms of biological role, f(1)F(0) ATP synthase produces ATP from ADP in the presence of a proton or sodium gradient. F-type ATPases consist of two structural domains, F(1) containing the extramembraneous catalytic core and F(0) containing the membrane proton channel, linked together by a central stalk and a peripheral stalk. During catalysis, ATP synthesis in the catalytic domain of F(1) is coupled via a rotary mechanism of the central stalk subunits to proton translocation. Functionally, key component of the F(0) channel; it plays a direct role in translocation across the membrane. A homomeric c-ring of between 10-14 subunits forms the central stalk rotor element with the F(1) delta and epsilon subunits. In Helicobacter pylori (strain P12), this protein is ATP synthase subunit c.